The chain runs to 356 residues: Alanine racemase, catabolic (356 aa).

Lys35 serves as the catalytic Proton acceptor; specific for D-alanine. N6-(pyridoxal phosphate)lysine is present on Lys35. Arg130 is a binding site for substrate. The active-site Proton acceptor; specific for L-alanine is the Tyr253. Met301 serves as a coordination point for substrate.

It belongs to the alanine racemase family. Pyridoxal 5'-phosphate is required as a cofactor.

It carries out the reaction L-alanine = D-alanine. Functionally, isomerizes L-alanine to D-alanine which is then oxidized to pyruvate by DadA. The protein is Alanine racemase, catabolic (dadX) of Escherichia coli O6:H1 (strain CFT073 / ATCC 700928 / UPEC).